The sequence spans 89 residues: Defensin-like protein 78 (89 aa).

The signal sequence occupies residues 1–30 (MANNMVASPYKNTFMMIALVLILLISGSEA). Disulfide bonds link C40/C75, C44/C67, C52/C73, and C56/C74.

It belongs to the DEFL family.

The protein localises to the secreted. This chain is Defensin-like protein 78, found in Arabidopsis thaliana (Mouse-ear cress).